The following is a 111-amino-acid chain: MIPGEYQLKKGDIELCVGRDSFVIEVANTGDRPIQVGSHYHFAETNSALSFDRKKAYGHRLAIPAGTATRFEPGQKREVSLLPYAGLRRIFGFRGEVMGALDDNSDSGETR.

It belongs to the urease beta subunit family. Heterotrimer of UreA (gamma), UreB (beta) and UreC (alpha) subunits. Three heterotrimers associate to form the active enzyme.

The protein resides in the cytoplasm. It carries out the reaction urea + 2 H2O + H(+) = hydrogencarbonate + 2 NH4(+). The protein operates within nitrogen metabolism; urea degradation; CO(2) and NH(3) from urea (urease route): step 1/1. This is Urease subunit beta from Psychrobacter cryohalolentis (strain ATCC BAA-1226 / DSM 17306 / VKM B-2378 / K5).